The following is a 191-amino-acid chain: Large ribosomal subunit protein eL6 (191 aa).

It belongs to the eukaryotic ribosomal protein eL6 family.

This chain is Large ribosomal subunit protein eL6 (RPL6), found in Tetrahymena thermophila (strain SB210).